The following is a 334-amino-acid chain: Nucleoid-associated protein YPTS_1390 (334 aa).

It belongs to the YejK family.

The protein localises to the cytoplasm. The protein resides in the nucleoid. The sequence is that of Nucleoid-associated protein YPTS_1390 from Yersinia pseudotuberculosis serotype IB (strain PB1/+).